A 1091-amino-acid chain; its full sequence is Sodium/potassium exporting P-type ATPase 2 (1091 aa).

Over 1 to 63 (MSEGTVKENN…LGDDTKIDYK (63 aa)) the chain is Cytoplasmic. A helical membrane pass occupies residues 64–84 (AMVLHQVCNAMIMVLVISMAI). The Extracellular segment spans residues 85 to 90 (SFAVRD). A helical membrane pass occupies residues 91 to 111 (WITGGVISFVIAVNVLIGLVQ). Over 112 to 282 (EYKATKTMNS…TNVGTPLHRK (171 aa)) the chain is Cytoplasmic. The helical transmembrane segment at 283-303 (LSKLAVLLFWIAVLFAIIVMA) threads the bilayer. Residues 304–312 (SQKFDVDKR) are Extracellular-facing. The chain crosses the membrane as a helical span at residues 313-333 (VAIYAICVALSMIPSSLVVVL). The Cytoplasmic segment spans residues 334-815 (TITMSVGAAV…RRMTDNIQKF (482 aa)). Asp-369 functions as the 4-aspartylphosphate intermediate in the catalytic mechanism. Residues Asp-369 and Thr-371 each contribute to the Mg(2+) site. Residues Thr-371 and Glu-483 each contribute to the ATP site. A disordered region spans residues 499-525 (ALTGEKSTNQSNENDQSSLSQHNEKPG). Polar residues predominate over residues 503–519 (EKSTNQSNENDQSSLSQ). Residues Lys-561, Arg-606, Thr-673, Gly-674, Asp-675, Arg-732, and Lys-738 each contribute to the ATP site. Asp-757 contributes to the Mg(2+) binding site. An ATP-binding site is contributed by Asn-760. A helical transmembrane segment spans residues 816–836 (VLQLLAENVAQALYLIIGLVF). Residues 837–848 (RDENGKSVFPLS) are Extracellular-facing. The helical transmembrane segment at 849 to 869 (PVEVLWIIVVTSCFPAMGLGL) threads the bilayer. Residues 870–885 (EKAAPDLMDRPPHDSE) are Cytoplasmic-facing. Residues 886–906 (VGIFTWEVIIDTFAYGIIMTG) traverse the membrane as a helical segment. Topologically, residues 907-943 (SCMASFTGSLYGINSGRLGHDCDGTYNSSCRDVYRSR) are extracellular. A helical membrane pass occupies residues 944-964 (SAAFATMTWCALILAWEVVDM). Residues 965–991 (RRSFFRMHPDTDSPVKEFFRSIWGNQF) are Cytoplasmic-facing. A helical transmembrane segment spans residues 992–1012 (LFWSIIFGFVSAFPVVYIPVI). Topologically, residues 1013-1021 (NDKVFLHKP) are extracellular. The helical transmembrane segment at 1022–1042 (IGAEWGLAIAFTIAFWIGAEL) threads the bilayer. The Cytoplasmic segment spans residues 1043–1091 (YKCGKRRYFKTQRAHNPENDLESNNKRDPFEAYSTSTTIHTEVNIGIKQ).

The protein belongs to the cation transport ATPase (P-type) (TC 3.A.3) family. Type IID subfamily. The cofactor is Mg(2+). Post-translationally, the active site is phosphorylated in presence of sodium or potassium and in conditions of higher pH. Not phosphorylated in presence of calcium ions.

Its subcellular location is the cell membrane. It carries out the reaction Na(+)(in) + ATP + H2O = Na(+)(out) + ADP + phosphate + H(+). The enzyme catalyses K(+)(in) + ATP + H2O = K(+)(out) + ADP + phosphate + H(+). Its function is as follows. Catalyzes the hydrolysis of ATP coupled with the export of sodium and potassium from the cell. May export potassium less efficiently. May transport other cations such as lithium. Sodium/potassium efflux ATPases are involved in salt tolerance and maintaining the membrane potential across the plasma membrane in high salinity (Na+) or alkaline (K+) environments. This Saccharomyces cerevisiae (strain ATCC 204508 / S288c) (Baker's yeast) protein is Sodium/potassium exporting P-type ATPase 2.